Reading from the N-terminus, the 281-residue chain is Bifunctional protein FolD (281 aa).

NADP(+) is bound by residues 161–163 (GRS), serine 186, and isoleucine 227.

Belongs to the tetrahydrofolate dehydrogenase/cyclohydrolase family. In terms of assembly, homodimer.

It catalyses the reaction (6R)-5,10-methylene-5,6,7,8-tetrahydrofolate + NADP(+) = (6R)-5,10-methenyltetrahydrofolate + NADPH. The enzyme catalyses (6R)-5,10-methenyltetrahydrofolate + H2O = (6R)-10-formyltetrahydrofolate + H(+). It participates in one-carbon metabolism; tetrahydrofolate interconversion. Functionally, catalyzes the oxidation of 5,10-methylenetetrahydrofolate to 5,10-methenyltetrahydrofolate and then the hydrolysis of 5,10-methenyltetrahydrofolate to 10-formyltetrahydrofolate. The chain is Bifunctional protein FolD from Brachyspira hyodysenteriae (strain ATCC 49526 / WA1).